Here is a 297-residue protein sequence, read N- to C-terminus: Acetylglutamate kinase (297 aa).

Residues 72 to 73, R94, and N193 contribute to the substrate site; that span reads GG.

The protein belongs to the acetylglutamate kinase family. ArgB subfamily.

The protein resides in the cytoplasm. It carries out the reaction N-acetyl-L-glutamate + ATP = N-acetyl-L-glutamyl 5-phosphate + ADP. It participates in amino-acid biosynthesis; L-arginine biosynthesis; N(2)-acetyl-L-ornithine from L-glutamate: step 2/4. Catalyzes the ATP-dependent phosphorylation of N-acetyl-L-glutamate. This chain is Acetylglutamate kinase, found in Mycobacterium leprae (strain TN).